The primary structure comprises 153 residues: Catabolic 3-dehydroquinase (153 aa).

The active-site Proton acceptor is the tyrosine 24. Substrate-binding residues include asparagine 75, histidine 81, and aspartate 88. The active-site Proton donor is histidine 101. Substrate contacts are provided by residues 102-103 and arginine 112; that span reads VS.

It belongs to the type-II 3-dehydroquinase family. Homododecamer. Adopts a ring-like structure, composed of an arrangement of two hexameric rings stacked on top of one another.

The catalysed reaction is 3-dehydroquinate = 3-dehydroshikimate + H2O. It functions in the pathway aromatic compound metabolism; 3,4-dihydroxybenzoate biosynthesis; 3,4-dihydroxybenzoate from 3-dehydroquinate: step 1/2. Functionally, is involved in the catabolism of quinate. Allows the utilization of quinate as carbon source via the beta-ketoadipate pathway. The chain is Catabolic 3-dehydroquinase from Emericella nidulans (strain FGSC A4 / ATCC 38163 / CBS 112.46 / NRRL 194 / M139) (Aspergillus nidulans).